Reading from the N-terminus, the 160-residue chain is Cytochrome b6-f complex subunit 4 (160 aa).

A run of 3 helical transmembrane segments spans residues 36–56 (LLYIFPVVIFGTIACNVGLAV), 95–115 (LLGVLLMAAVPAGLLTVPFLE), and 131–151 (TVFLIGTVVSIWLGIGAAMPI).

It belongs to the cytochrome b family. PetD subfamily. As to quaternary structure, the 4 large subunits of the cytochrome b6-f complex are cytochrome b6, subunit IV (17 kDa polypeptide, petD), cytochrome f and the Rieske protein, while the 4 small subunits are petG, petL, petM and petN. The complex functions as a dimer.

It localises to the plastid. The protein localises to the chloroplast thylakoid membrane. Component of the cytochrome b6-f complex, which mediates electron transfer between photosystem II (PSII) and photosystem I (PSI), cyclic electron flow around PSI, and state transitions. The polypeptide is Cytochrome b6-f complex subunit 4 (Zygnema circumcarinatum (Green alga)).